The following is an 87-amino-acid chain: Small ribosomal subunit protein uS15 (87 aa).

This sequence belongs to the universal ribosomal protein uS15 family. As to quaternary structure, part of the 30S ribosomal subunit. Forms a bridge to the 50S subunit in the 70S ribosome, contacting the 23S rRNA.

One of the primary rRNA binding proteins, it binds directly to 16S rRNA where it helps nucleate assembly of the platform of the 30S subunit by binding and bridging several RNA helices of the 16S rRNA. Its function is as follows. Forms an intersubunit bridge (bridge B4) with the 23S rRNA of the 50S subunit in the ribosome. This chain is Small ribosomal subunit protein uS15, found in Clostridium beijerinckii (strain ATCC 51743 / NCIMB 8052) (Clostridium acetobutylicum).